Reading from the N-terminus, the 312-residue chain is Ribosomal RNA small subunit methyltransferase H (312 aa).

S-adenosyl-L-methionine is bound by residues 35 to 37, Asp55, Phe80, Asp102, and Gln109; that span reads GGH.

This sequence belongs to the methyltransferase superfamily. RsmH family.

The protein localises to the cytoplasm. It catalyses the reaction cytidine(1402) in 16S rRNA + S-adenosyl-L-methionine = N(4)-methylcytidine(1402) in 16S rRNA + S-adenosyl-L-homocysteine + H(+). Functionally, specifically methylates the N4 position of cytidine in position 1402 (C1402) of 16S rRNA. The protein is Ribosomal RNA small subunit methyltransferase H of Pseudoalteromonas translucida (strain TAC 125).